A 694-amino-acid chain; its full sequence is Polyribonucleotide nucleotidyltransferase (694 aa).

Mg(2+) is bound by residues Asp485 and Asp491. In terms of domain architecture, KH spans 552–611; sequence PRIETMQIKPNKIATVIGPGGKQIRQIIEEAGVQIDINDSGLVSISASSPQAIEKAKSII. Positions 621-689 constitute an S1 motif domain; the sequence is GKIYEGRVTS…EKGQYKLSHK (69 aa).

The protein belongs to the polyribonucleotide nucleotidyltransferase family. The cofactor is Mg(2+).

The protein resides in the cytoplasm. It carries out the reaction RNA(n+1) + phosphate = RNA(n) + a ribonucleoside 5'-diphosphate. In terms of biological role, involved in mRNA degradation. Catalyzes the phosphorolysis of single-stranded polyribonucleotides processively in the 3'- to 5'-direction. This Chlamydia felis (strain Fe/C-56) (Chlamydophila felis) protein is Polyribonucleotide nucleotidyltransferase.